Here is a 485-residue protein sequence, read N- to C-terminus: Regulatory protein ViaA (485 aa).

The protein belongs to the ViaA family. As to quaternary structure, homodimer. Interacts with RavA.

The protein localises to the cytoplasm. In terms of biological role, component of the RavA-ViaA chaperone complex, which may act on the membrane to optimize the function of some of the respiratory chains. ViaA stimulates the ATPase activity of RavA. In Photorhabdus laumondii subsp. laumondii (strain DSM 15139 / CIP 105565 / TT01) (Photorhabdus luminescens subsp. laumondii), this protein is Regulatory protein ViaA.